Consider the following 243-residue polypeptide: 3,4-dihydroxyphthalate decarboxylase (243 aa).

Residue E86 is the Proton donor/acceptor of the active site. Residues E86, H105, H107, and H173 each contribute to the a divalent metal cation site.

This sequence belongs to the aldolase class II family. A divalent metal cation is required as a cofactor.

The catalysed reaction is 3,4-dihydroxyphthalate + H(+) = 3,4-dihydroxybenzoate + CO2. It functions in the pathway xenobiotic degradation; phthalate degradation. Functionally, catalyzes the decarboxylation of 3,4-dihydroxyphthalate to protocatechuate (3,4-dihydroxybenzoate) during phthalate metabolism. The sequence is that of 3,4-dihydroxyphthalate decarboxylase from Rhodococcus jostii (strain RHA1).